A 331-amino-acid chain; its full sequence is Inactive serine/threonine-protein kinase BKN1 (331 aa).

Gly-2 is lipidated: N-myristoyl glycine. A lipid anchor (S-palmitoyl cysteine) is attached at Cys-4. In terms of domain architecture, Protein kinase spans 58-328 (DYSVRKFYKG…VLDGLNHIAE (271 aa)).

The protein belongs to the protein kinase superfamily. Ser/Thr protein kinase family. Restricted to stigma in flowers.

The protein localises to the cell membrane. Its subcellular location is the nucleus. Its function is as follows. Collaboratively with BKN2/SZE2, involved in compatible pollen-stigma interactions. The chain is Inactive serine/threonine-protein kinase BKN1 from Arabidopsis thaliana (Mouse-ear cress).